A 103-amino-acid chain; its full sequence is Phosphoribosyl-ATP pyrophosphatase (103 aa).

It belongs to the PRA-PH family.

It is found in the cytoplasm. It carries out the reaction 1-(5-phospho-beta-D-ribosyl)-ATP + H2O = 1-(5-phospho-beta-D-ribosyl)-5'-AMP + diphosphate + H(+). Its pathway is amino-acid biosynthesis; L-histidine biosynthesis; L-histidine from 5-phospho-alpha-D-ribose 1-diphosphate: step 2/9. This is Phosphoribosyl-ATP pyrophosphatase (hisE) from Cereibacter sphaeroides (strain ATCC 17023 / DSM 158 / JCM 6121 / CCUG 31486 / LMG 2827 / NBRC 12203 / NCIMB 8253 / ATH 2.4.1.) (Rhodobacter sphaeroides).